The following is a 623-amino-acid chain: Kelch repeat and BTB domain-containing protein 12 (623 aa).

Residues 31–98 form the BTB domain; that stretch reads IDVVLTAEGE…MYNAALEINN (68 aa). One can recognise a BACK domain in the interval 133-235; it reads CLGIYYFAKQ…NPSFLRQALR (103 aa). Kelch repeat units follow at residues 386 to 436, 437 to 492, 494 to 547, and 553 to 603; these read DLYV…TVNN, KLYV…VVNS, IYVL…STNA, and KLYV…LVAR.

The chain is Kelch repeat and BTB domain-containing protein 12 (KBTBD12) from Homo sapiens (Human).